A 319-amino-acid polypeptide reads, in one-letter code: Acetaldehyde dehydrogenase 1 (319 aa).

The active-site Acyl-thioester intermediate is the Cys-129. Residues 160–168 (SAGPGTRAN) and Asn-287 contribute to the NAD(+) site.

It belongs to the acetaldehyde dehydrogenase family.

It carries out the reaction acetaldehyde + NAD(+) + CoA = acetyl-CoA + NADH + H(+). This is Acetaldehyde dehydrogenase 1 from Burkholderia lata (strain ATCC 17760 / DSM 23089 / LMG 22485 / NCIMB 9086 / R18194 / 383).